The primary structure comprises 351 residues: Dihydroorotate dehydrogenase (quinone) (351 aa).

FMN contacts are provided by residues 61–65 (AGLDK) and Thr-85. Lys-65 provides a ligand contact to substrate. 110 to 114 (NRMGF) contacts substrate. Residues Asn-139 and Asn-172 each contribute to the FMN site. Position 172 (Asn-172) interacts with substrate. Residue Ser-175 is the Nucleophile of the active site. Asn-177 contacts substrate. Residues Lys-217 and Thr-245 each contribute to the FMN site. A substrate-binding site is contributed by 246 to 247 (NT). FMN is bound by residues Gly-268, Gly-297, and 318–319 (YS).

Belongs to the dihydroorotate dehydrogenase family. Type 2 subfamily. Monomer. Requires FMN as cofactor.

The protein localises to the cell membrane. It carries out the reaction (S)-dihydroorotate + a quinone = orotate + a quinol. The protein operates within pyrimidine metabolism; UMP biosynthesis via de novo pathway; orotate from (S)-dihydroorotate (quinone route): step 1/1. Catalyzes the conversion of dihydroorotate to orotate with quinone as electron acceptor. This chain is Dihydroorotate dehydrogenase (quinone), found in Xanthomonas axonopodis pv. citri (strain 306).